We begin with the raw amino-acid sequence, 171 residues long: Iron-sulfur cluster assembly protein 3 (171 aa).

Residues 1–49 (MLRQTTKRAFLGLASQNPTPFPVVSRLYHPNVIDHYDNPRNVGSFDKND) constitute a mitochondrion transit peptide.

The protein belongs to the NifU family. Component of the core Fe-S cluster (ISC) assembly machinery. [2Fe-2S] cluster is required as a cofactor. As to expression, mostly expressed in flowers and pollen, and, to a lower extent, in leaves and roots.

It localises to the mitochondrion matrix. It functions in the pathway cofactor biosynthesis; iron-sulfur cluster biosynthesis. Its function is as follows. Scaffold protein for the de novo synthesis of iron-sulfur (Fe-S) clusters within mitochondria, which is required for maturation of both mitochondrial and cytoplasmic [2Fe-2S] and [4Fe-4S] proteins. First, a [2Fe-2S] cluster is transiently assembled on the scaffold protein ISCU (ISU1, ISU2 or ISU3). In a second step, the cluster is released from ISCU, transferred to a glutaredoxin, followed by the formation of mitochondrial [2Fe-2S] proteins, the synthesis of [4Fe-4S] clusters and their target-specific insertion into the recipient apoproteins. Cluster assembly on ISCU depends on the function of the cysteine desulfurase complex NFS1-ISD11, which serves as the sulfur donor for cluster synthesis, the iron-binding protein frataxin as the putative iron donor, and the electron transfer chain comprised of ferredoxin reductase and ferredoxin, which receive their electrons from NADH. The sequence is that of Iron-sulfur cluster assembly protein 3 (ISU3) from Arabidopsis thaliana (Mouse-ear cress).